The sequence spans 307 residues: Coproporphyrin III ferrochelatase (307 aa).

Fe-coproporphyrin III contacts are provided by residues Tyr12, Arg29, 45–46 (RY), Ser53, and Tyr124. Positions 181 and 263 each coordinate Fe(2+).

Belongs to the ferrochelatase family.

The protein resides in the cytoplasm. It carries out the reaction Fe-coproporphyrin III + 2 H(+) = coproporphyrin III + Fe(2+). Its pathway is porphyrin-containing compound metabolism; protoheme biosynthesis. Involved in coproporphyrin-dependent heme b biosynthesis. Catalyzes the insertion of ferrous iron into coproporphyrin III to form Fe-coproporphyrin III. This Staphylococcus aureus (strain COL) protein is Coproporphyrin III ferrochelatase.